The chain runs to 410 residues: Mannosyl phosphorylinositol ceramide synthase regulatory protein CSG2 (410 aa).

The N-terminal stretch at 1–17 (MSTTLLWFSSVIGYVIQ) is a signal peptide. Topologically, residues 18–50 (TKCLSNIQSKKEISVGPNGTIATPETNGDNGNS) are lumenal. Residues Asn35 and Asn49 are each glycosylated (N-linked (GlcNAc...) asparagine). Residues 51–71 (SSLTFYLTFMYFASWLLLVPA) traverse the membrane as a helical segment. At 72–141 (SRLWEKMRPM…SVATFKYVAK (70 aa)) the chain is on the cytoplasmic side. The helical transmembrane segment at 142–161 (LTVLALIMIVADLTYNMALS) threads the bilayer. Residues 162–167 (LSPAFD) are Lumenal-facing. Residues 168–187 (VALMQNTAIFEIVTLLYGVC) form a helical membrane-spanning segment. Residues 188-197 (GISRKNYVFR) are Cytoplasmic-facing. The helical transmembrane segment at 198–217 (NFLIMMNAVIGILIISYTKA) threads the bilayer. The Lumenal segment spans residues 218 to 245 (TCDMLAGKLSVNPNTGELSDPFLFDRLK). A helical membrane pass occupies residues 246–265 (GALICGLGALIMGPFAVLWN). The Cytoplasmic portion of the chain corresponds to 266–285 (RWFCSNISKNENSAVVLVKQ). Residues 286–305 (STHMALIGIIGMVILLPFIP) form a helical membrane-spanning segment. The Lumenal segment spans residues 306 to 324 (KFPSRESVESISLFYNDKS). The chain crosses the membrane as a helical span at residues 325–344 (FWFSLLGSIIFGSLPSLISI). Residues 345–355 (LELNRKAPAEY) lie on the Cytoplasmic side of the membrane. The helical transmembrane segment at 356-374 (LTTCNLGAIIFMGLAEWVC) threads the bilayer. The Lumenal segment spans residues 375-385 (EPTQTTIVRWE). A helical transmembrane segment spans residues 386–404 (VIGYIMLTVSLLVLSVTLG). Residues 405–410 (EGKYHH) are Cytoplasmic-facing.

As to quaternary structure, heterodimer of CSH1 and CSG2, and SUR1 and CSG2.

It localises to the endoplasmic reticulum membrane. In terms of biological role, required for calcium regulation. May regulate calcium accumulation by a non-vacuole organelle. Also regulates the activity of CSH1 and SUR1 during mannosyl phosphorylinositol ceramide synthesis. This chain is Mannosyl phosphorylinositol ceramide synthase regulatory protein CSG2 (CSG2), found in Saccharomyces cerevisiae (strain ATCC 204508 / S288c) (Baker's yeast).